Consider the following 220-residue polypeptide: MAILFAVVARGTTILAKHAWCGGNFLEVTEQILAKIPSENNKLTYSHGNYLFHYICQDRIIYLCITDDDFERSRAFNFLNEIKKRFQTTYGSRAQTALPYAMNSEFSSVLAAQLKYHSESKGTDQVAETQAQVDELKGIMVRNIDLVAQRGEKLELLIDKTENLVDSSVTFKTTSRNLARAMCMKNLKLTIIIIIVSIVIIYIIVSAACGGLAWPSCVQK.

Residues 2–188 (AILFAVVARG…ARAMCMKNLK (187 aa)) are Cytoplasmic-facing. The 104-residue stretch at 7-110 (VVARGTTILA…AMNSEFSSVL (104 aa)) folds into the Longin domain. The v-SNARE coiled-coil homology domain occupies 125-185 (QVAETQAQVD…RNLARAMCMK (61 aa)). Residues 189-209 (LTIIIIIVSIVIIYIIVSAAC) traverse the membrane as a helical; Anchor for type IV membrane protein segment. The Vesicular portion of the chain corresponds to 210–220 (GGLAWPSCVQK).

This sequence belongs to the synaptobrevin family.

The protein localises to the cytoplasmic vesicle. Its subcellular location is the secretory vesicle membrane. It localises to the golgi apparatus. It is found in the trans-Golgi network membrane. The protein resides in the late endosome membrane. The protein localises to the lysosome membrane. Its subcellular location is the endoplasmic reticulum membrane. It localises to the phagosome membrane. It is found in the synapse. The protein resides in the synaptosome. Involved in the targeting and/or fusion of transport vesicles to their target membrane during transport of proteins from the early endosome to the lysosome. Required for heterotypic fusion of late endosomes with lysosomes and homotypic lysosomal fusion. Required for calcium regulated lysosomal exocytosis. Involved in the export of chylomicrons from the endoplasmic reticulum to the cis Golgi. Required for focal exocytosis of late endocytic vesicles during phagosome formation. In Gallus gallus (Chicken), this protein is Vesicle-associated membrane protein 7.